Reading from the N-terminus, the 795-residue chain is Protocadherin beta-5 (795 aa).

Residues 1 to 30 form the signal peptide; it reads METALAKTPQKRQVMFLAILLLLWEAGSEA. The Extracellular segment spans residues 31–689; it reads VRYSIPEETE…AQADSLTVYL (659 aa). Cadherin domains lie at 35–133, 138–242, 247–346, 351–450, and 455–560; these read IPEE…APEF, MLLK…APEF, YEVQ…APEL, LSSP…APAF, and YTLF…SPFV. Asn169 carries N-linked (GlcNAc...) asparagine glycosylation. An N6-acetyllysine modification is found at Lys296. N-linked (GlcNAc...) asparagine glycans are attached at residues Asn417 and Asn435. N-linked (GlcNAc...) asparagine glycosylation occurs at Asn566. In terms of domain architecture, Cadherin 6 spans 567–670; sequence GSAPCTELVP…LVDGFSQPYL (104 aa). A helical membrane pass occupies residues 690–710; sequence VVALASVSSLFLFSVLLFVAV. Topologically, residues 711–795 are cytoplasmic; the sequence is RLCRRSRAAP…AAFRNSFGLN (85 aa).

Its subcellular location is the cell membrane. Its function is as follows. Potential calcium-dependent cell-adhesion protein. May be involved in the establishment and maintenance of specific neuronal connections in the brain. In Homo sapiens (Human), this protein is Protocadherin beta-5 (PCDHB5).